Reading from the N-terminus, the 476-residue chain is Stromelysin-2 (476 aa).

The signal sequence occupies residues 1–17; the sequence is MMHLAFLVLLCLPVCSA. Positions 18–98 are cleaved as a propeptide — activation peptide; sequence YPLSGAAKEE…PRCGVPDVGH (81 aa). The Cysteine switch motif lies at 89–96; sequence PRCGVPDV. Residues Cys91, His167, Asp169, His182, His195, and His217 each contribute to the Zn(2+) site. Residue Glu218 is part of the active site. Residues His221 and His227 each contribute to the Zn(2+) site. Hemopexin repeat units lie at residues 286–335, 336–382, 384–432, and 433–476; these read PAKC…WPSL, PSYL…GFPP, IRKI…FPGV, and EPKV…WLHC. Cysteines 289 and 476 form a disulfide.

It belongs to the peptidase M10A family. Zn(2+) serves as cofactor. Requires Ca(2+) as cofactor.

It localises to the secreted. Its subcellular location is the extracellular space. It is found in the extracellular matrix. The catalysed reaction is Similar to stromelysin 1, but action on collagen types III, IV and V is weak.. Functionally, can degrade fibronectin, gelatins of type I, III, IV, and V; weakly collagens III, IV, and V. Activates procollagenase. This chain is Stromelysin-2 (MMP10), found in Homo sapiens (Human).